Reading from the N-terminus, the 185-residue chain is Threonylcarbamoyl-AMP synthase (185 aa).

The region spanning 4–185 (SWRVQQAARE…LATGNIVRPA (182 aa)) is the YrdC-like domain.

The protein belongs to the SUA5 family. TsaC subfamily.

The protein resides in the cytoplasm. It carries out the reaction L-threonine + hydrogencarbonate + ATP = L-threonylcarbamoyladenylate + diphosphate + H2O. In terms of biological role, required for the formation of a threonylcarbamoyl group on adenosine at position 37 (t(6)A37) in tRNAs that read codons beginning with adenine. Catalyzes the conversion of L-threonine, HCO(3)(-)/CO(2) and ATP to give threonylcarbamoyl-AMP (TC-AMP) as the acyladenylate intermediate, with the release of diphosphate. The protein is Threonylcarbamoyl-AMP synthase of Pseudomonas fluorescens (strain Pf0-1).